The primary structure comprises 565 residues: Oxygen-dependent choline dehydrogenase (565 aa).

7–36 (DYIICGAGSAGNVLATRLTEDPDVTVLLLE) provides a ligand contact to FAD. H474 functions as the Proton acceptor in the catalytic mechanism.

This sequence belongs to the GMC oxidoreductase family. FAD serves as cofactor.

The catalysed reaction is choline + A = betaine aldehyde + AH2. It catalyses the reaction betaine aldehyde + NAD(+) + H2O = glycine betaine + NADH + 2 H(+). The protein operates within amine and polyamine biosynthesis; betaine biosynthesis via choline pathway; betaine aldehyde from choline (cytochrome c reductase route): step 1/1. Involved in the biosynthesis of the osmoprotectant glycine betaine. Catalyzes the oxidation of choline to betaine aldehyde and betaine aldehyde to glycine betaine at the same rate. The protein is Oxygen-dependent choline dehydrogenase of Burkholderia thailandensis (strain ATCC 700388 / DSM 13276 / CCUG 48851 / CIP 106301 / E264).